A 201-amino-acid chain; its full sequence is Small ribosomal subunit protein uS4 (201 aa).

The disordered stretch occupies residues 26 to 47 (LSKKNYPPGQHGNNRRRKTSEY). The region spanning 92 to 154 (ARLDNVVFRL…SKSLEVIADA (63 aa)) is the S4 RNA-binding domain.

The protein belongs to the universal ribosomal protein uS4 family. As to quaternary structure, part of the 30S ribosomal subunit. Contacts protein S5. The interaction surface between S4 and S5 is involved in control of translational fidelity.

Its function is as follows. One of the primary rRNA binding proteins, it binds directly to 16S rRNA where it nucleates assembly of the body of the 30S subunit. In terms of biological role, with S5 and S12 plays an important role in translational accuracy. This chain is Small ribosomal subunit protein uS4, found in Porphyromonas gingivalis (strain ATCC 33277 / DSM 20709 / CIP 103683 / JCM 12257 / NCTC 11834 / 2561).